The following is a 298-amino-acid chain: Diphthine methyl ester synthase (298 aa).

S-adenosyl-L-methionine-binding positions include Leu-9, Asp-85, Gly-88, 113 to 114, Leu-164, Leu-222, and His-247; that span reads SV.

Belongs to the diphthine synthase family.

It is found in the cytoplasm. It carries out the reaction 2-[(3S)-amino-3-carboxypropyl]-L-histidyl-[translation elongation factor 2] + 4 S-adenosyl-L-methionine = diphthine methyl ester-[translation elongation factor 2] + 4 S-adenosyl-L-homocysteine + 3 H(+). Its pathway is protein modification; peptidyl-diphthamide biosynthesis. S-adenosyl-L-methionine-dependent methyltransferase that catalyzes four methylations of the modified target histidine residue in translation elongation factor 2 (EF-2), to form an intermediate called diphthine methyl ester. The four successive methylation reactions represent the second step of diphthamide biosynthesis. The polypeptide is Diphthine methyl ester synthase (DPH5) (Eremothecium gossypii (strain ATCC 10895 / CBS 109.51 / FGSC 9923 / NRRL Y-1056) (Yeast)).